The following is a 286-amino-acid chain: Citrullinase (286 aa).

Residues 4–258 form the CN hydrolase domain; it reads IKVAVVQLSF…DDILYATFDF (255 aa). Glu43 (proton acceptor) is an active-site residue. Lys116 is an active-site residue. The active-site Nucleophile is the Cys153.

It belongs to the carbon-nitrogen hydrolase superfamily.

It carries out the reaction L-citrulline + H2O + 2 H(+) = L-ornithine + NH4(+) + CO2. Functionally, catalyzes the degradation of citrulline into ornithine, carbon dioxide and ammonia. Contributes to intramacrophage survival, in vivo growth and pathogenesis. This chain is Citrullinase, found in Francisella tularensis subsp. tularensis (strain SCHU S4 / Schu 4).